The sequence spans 104 residues: MHVKKGDTVIVNAGKDKGKKGRVLAAYPKKERVLVEGINLVKKHSRPSQANPQGGIVTQEAAIHVSNVSLIDPKSGKATRIGYKVLDNGKKVRYAKKSGEVLDK.

This sequence belongs to the universal ribosomal protein uL24 family. In terms of assembly, part of the 50S ribosomal subunit.

One of two assembly initiator proteins, it binds directly to the 5'-end of the 23S rRNA, where it nucleates assembly of the 50S subunit. Its function is as follows. One of the proteins that surrounds the polypeptide exit tunnel on the outside of the subunit. The sequence is that of Large ribosomal subunit protein uL24 from Brevibacillus brevis (strain 47 / JCM 6285 / NBRC 100599).